The chain runs to 143 residues: Large ribosomal subunit protein uL22c (143 aa).

Belongs to the universal ribosomal protein uL22 family. Part of the 50S ribosomal subunit.

It is found in the plastid. The protein resides in the chloroplast. Its function is as follows. This protein binds specifically to 23S rRNA. In terms of biological role, the globular domain of the protein is located near the polypeptide exit tunnel on the outside of the subunit, while an extended beta-hairpin is found that lines the wall of the exit tunnel in the center of the 70S ribosome. The protein is Large ribosomal subunit protein uL22c (rpl22) of Piper cenocladum (Ant piper).